Consider the following 935-residue polypeptide: Protocadherin gamma-A11 (935 aa).

The N-terminal stretch at 1–29 (MANRLQRGDRSRLLLLLCIFLGTLRGFRA) is a signal peptide. Cadherin domains lie at 30 to 134 (RQIR…APSF), 135 to 243 (QEDE…IPMF), 244 to 348 (TQSV…APEI), 349 to 453 (TITS…PPVF), 454 to 563 (PHSS…APEI), and 571 to 677 (DGST…ADLG). Topologically, residues 30–693 (RQIRYSVPEE…NSETSDLSLY (664 aa)) are extracellular. A glycan (N-linked (GlcNAc...) asparagine) is linked at asparagine 48. 4 N-linked (GlcNAc...) asparagine glycosylation sites follow: asparagine 255, asparagine 266, asparagine 420, and asparagine 546. The chain crosses the membrane as a helical span at residues 694-714 (LVVAVAAVSCIFLVFVIVLLA). Over 715-935 (LRLWRWHKSR…KKKSGKKEKK (221 aa)) the chain is Cytoplasmic. Disordered regions lie at residues 805-844 (CDPT…WPNN) and 905-935 (ATLT…KEKK). Residues 807–844 (PTSNQQAPPNTDWRFSQAQRPGTSGSQNGDDTGTWPNN) show a composition bias toward polar residues. Positions 925 to 935 (NKKKSGKKEKK) are enriched in basic residues.

The protein resides in the cell membrane. Its function is as follows. Potential calcium-dependent cell-adhesion protein. May be involved in the establishment and maintenance of specific neuronal connections in the brain. The protein is Protocadherin gamma-A11 (PCDHGA11) of Homo sapiens (Human).